The sequence spans 335 residues: Glycerol-3-phosphate dehydrogenase [NAD(P)+] (335 aa).

Residues S10, F11, R31, and K105 each contribute to the NADPH site. 3 residues coordinate sn-glycerol 3-phosphate: K105, G136, and S138. An NADPH-binding site is contributed by A140. Residues K191, D244, S254, R255, and N256 each coordinate sn-glycerol 3-phosphate. K191 (proton acceptor) is an active-site residue. R255 is a binding site for NADPH. Positions 279 and 281 each coordinate NADPH.

This sequence belongs to the NAD-dependent glycerol-3-phosphate dehydrogenase family.

Its subcellular location is the cytoplasm. It carries out the reaction sn-glycerol 3-phosphate + NAD(+) = dihydroxyacetone phosphate + NADH + H(+). The catalysed reaction is sn-glycerol 3-phosphate + NADP(+) = dihydroxyacetone phosphate + NADPH + H(+). The protein operates within membrane lipid metabolism; glycerophospholipid metabolism. Its function is as follows. Catalyzes the reduction of the glycolytic intermediate dihydroxyacetone phosphate (DHAP) to sn-glycerol 3-phosphate (G3P), the key precursor for phospholipid synthesis. This chain is Glycerol-3-phosphate dehydrogenase [NAD(P)+], found in Leptospira borgpetersenii serovar Hardjo-bovis (strain JB197).